The chain runs to 199 residues: Pyridoxal 5'-phosphate synthase subunit PdxT (199 aa).

Residue 51–53 (GES) coordinates L-glutamine. Cysteine 83 acts as the Nucleophile in catalysis. L-glutamine contacts are provided by residues arginine 110 and 137–138 (IR). Catalysis depends on charge relay system residues histidine 172 and glutamate 174.

It belongs to the glutaminase PdxT/SNO family. In terms of assembly, in the presence of PdxS, forms a dodecamer of heterodimers. Only shows activity in the heterodimer.

The catalysed reaction is aldehydo-D-ribose 5-phosphate + D-glyceraldehyde 3-phosphate + L-glutamine = pyridoxal 5'-phosphate + L-glutamate + phosphate + 3 H2O + H(+). It carries out the reaction L-glutamine + H2O = L-glutamate + NH4(+). It participates in cofactor biosynthesis; pyridoxal 5'-phosphate biosynthesis. In terms of biological role, catalyzes the hydrolysis of glutamine to glutamate and ammonia as part of the biosynthesis of pyridoxal 5'-phosphate. The resulting ammonia molecule is channeled to the active site of PdxS. The chain is Pyridoxal 5'-phosphate synthase subunit PdxT from Thermoplasma volcanium (strain ATCC 51530 / DSM 4299 / JCM 9571 / NBRC 15438 / GSS1).